A 342-amino-acid polypeptide reads, in one-letter code: Ferredoxin--NADP reductase (342 aa).

FAD contacts are provided by Cys-17, Asp-36, Gln-44, Tyr-49, Val-89, Phe-124, Asp-289, and Thr-330.

It belongs to the ferredoxin--NADP reductase type 2 family. As to quaternary structure, homodimer. FAD serves as cofactor.

The enzyme catalyses 2 reduced [2Fe-2S]-[ferredoxin] + NADP(+) + H(+) = 2 oxidized [2Fe-2S]-[ferredoxin] + NADPH. The sequence is that of Ferredoxin--NADP reductase from Nitrobacter hamburgensis (strain DSM 10229 / NCIMB 13809 / X14).